The chain runs to 280 residues: Diaminopimelate epimerase (280 aa).

2 residues coordinate substrate: N13 and N64. The Proton donor role is filled by C73. Substrate is bound by residues 74-75 (GN), N164, N197, and 215-216 (ER). C224 (proton acceptor) is an active-site residue. Residue 225-226 (GT) coordinates substrate.

This sequence belongs to the diaminopimelate epimerase family. As to quaternary structure, homodimer.

It is found in the cytoplasm. It carries out the reaction (2S,6S)-2,6-diaminopimelate = meso-2,6-diaminopimelate. Its pathway is amino-acid biosynthesis; L-lysine biosynthesis via DAP pathway; DL-2,6-diaminopimelate from LL-2,6-diaminopimelate: step 1/1. In terms of biological role, catalyzes the stereoinversion of LL-2,6-diaminopimelate (L,L-DAP) to meso-diaminopimelate (meso-DAP), a precursor of L-lysine and an essential component of the bacterial peptidoglycan. This is Diaminopimelate epimerase from Leptospira biflexa serovar Patoc (strain Patoc 1 / Ames).